The sequence spans 378 residues: Endopolygalacturonase I (378 aa).

An N-terminal signal peptide occupies residues 1–20 (MHLNTTLLVSLALGAASVLA). The propeptide occupies 21–39 (SPAPPAITAPPTAEEIAKR). The cysteines at positions 43 and 61 are disulfide-linked. A glycan (O-linked (Man...) threonine) is linked at Thr44. O-linked (Man...) serine glycans are attached at residues Ser46, Ser48, Ser52, Ser53, Ser55, Ser57, and Ser62. Thr63 carries O-linked (Man...) threonine glycosylation. Ser73 carries an O-linked (Man...) serine glycan. PbH1 repeat units lie at residues 174 to 204 (SDYL…DIGT), 205 to 226 (STYV…AVNS), 227 to 247 (GENI…SIGS), 256 to 277 (VKNV…RIKT), and 285 to 307 (VSDV…VVQQ). The active-site Proton donor is Asp219. Cys221 and Cys237 are joined by a disulfide. His241 is an active-site residue. Asn258 carries an N-linked (GlcNAc...) asparagine glycan. 2 disulfide bridges follow: Cys345-Cys350 and Cys369-Cys378.

This sequence belongs to the glycosyl hydrolase 28 family.

The protein localises to the secreted. The catalysed reaction is (1,4-alpha-D-galacturonosyl)n+m + H2O = (1,4-alpha-D-galacturonosyl)n + (1,4-alpha-D-galacturonosyl)m.. Functionally, involved in maceration and soft-rotting of plant tissue. Hydrolyzes the 1,4-alpha glycosidic bonds of de-esterified pectate in the smooth region of the plant cell wall. This chain is Endopolygalacturonase I (pgaI), found in Aspergillus aculeatus.